Reading from the N-terminus, the 311-residue chain is Peptide methionine sulfoxide reductase MsrA/MsrB (311 aa).

Residues 1 to 155 are peptide methionine sulfoxide reductase A; that stretch reads MAEIYLAGGC…PGGYCHINVN (155 aa). C10 is an active-site residue. The 124-residue stretch at 172–295 folds into the MsrB domain; it reads DAELKEQLTQ…NSAALRFIPK (124 aa). C284 acts as the Nucleophile in catalysis.

In the N-terminal section; belongs to the MsrA Met sulfoxide reductase family. It in the C-terminal section; belongs to the MsrB Met sulfoxide reductase family.

It carries out the reaction L-methionyl-[protein] + [thioredoxin]-disulfide + H2O = L-methionyl-(S)-S-oxide-[protein] + [thioredoxin]-dithiol. It catalyses the reaction [thioredoxin]-disulfide + L-methionine + H2O = L-methionine (S)-S-oxide + [thioredoxin]-dithiol. The enzyme catalyses L-methionyl-[protein] + [thioredoxin]-disulfide + H2O = L-methionyl-(R)-S-oxide-[protein] + [thioredoxin]-dithiol. In terms of biological role, has an important function as a repair enzyme for proteins that have been inactivated by oxidation. Catalyzes the reversible oxidation-reduction of methionine sulfoxide in proteins to methionine. Involved in protection against oxidative stress when the bacterium enters the host bloodstream and required for maximal growth under aerobic and anaerobic conditions. This is Peptide methionine sulfoxide reductase MsrA/MsrB (msrAB) from Streptococcus gordonii (strain Challis / ATCC 35105 / BCRC 15272 / CH1 / DL1 / V288).